A 151-amino-acid chain; its full sequence is Small ribosomal subunit protein bS6 (151 aa).

The disordered stretch occupies residues 97–151 (EAEPSAMMQKRDRDDRKDRDRGDRPRRRDDDFGGGDRGDRGDRGDRPERNFGGEN). Positions 105-151 (QKRDRDDRKDRDRGDRPRRRDDDFGGGDRGDRGDRGDRPERNFGGEN) are enriched in basic and acidic residues.

Belongs to the bacterial ribosomal protein bS6 family.

Binds together with bS18 to 16S ribosomal RNA. In Methylorubrum populi (strain ATCC BAA-705 / NCIMB 13946 / BJ001) (Methylobacterium populi), this protein is Small ribosomal subunit protein bS6.